The sequence spans 168 residues: Mesencephalic astrocyte-derived neurotrophic factor homolog (168 aa).

The first 17 residues, 1 to 17 (MSRLVLLISLVIVVASA), serve as a signal peptide directing secretion. 4 cysteine pairs are disulfide-bonded: C22/C109, C25/C97, C55/C66, and C143/C146.

Belongs to the ARMET family. As to expression, expressed in the intestine, spermatheca and nervous system. Expressed in the hypoderm. Expressed in structures of the excretory system. Not expressed in the male gonad.

The protein localises to the secreted. Its subcellular location is the endoplasmic reticulum lumen. In terms of biological role, inhibits endoplasmic reticulum (ER) stress response. Retained in the ER under normal conditions and is up-regulated and secreted by the ER in response to ER stress and hypoxia. Following secretion by the ER, directly binds to 3-O-sulfogalactosylceramide, a lipid sulfatide in the outer cell membrane of target cells. Sulfatide binding promotes its cellular uptake by endocytosis, and is required for its role in alleviating ER stress under ER stress conditions. Has a neuroprotective role, ensuring survival of dopaminergic neurons during normal growth. The protein is Mesencephalic astrocyte-derived neurotrophic factor homolog of Caenorhabditis elegans.